Here is a 35-residue protein sequence, read N- to C-terminus: Z-limacoditoxin(1)-Dv4 (35 aa).

Positions 1 to 22 (MKKTFLPIFLVILLASYALGNP) are cleaved as a signal peptide. A Pyrrolidone carboxylic acid modification is found at Gln-23. Residue Pro-32 is modified to Proline amide.

This sequence belongs to the limacoditoxin-1 (ACP-like) family. Expressed by the venom secretory cell of the spine. The spine is a cuticular structure containing a single large nucleated venom-secreting cell at its base. It is an independent unit capable of producing, storing and injecting venom. On the back of D.vulnerans caterpillars, spines are grouped together by 50 to 100 to form scoli, of which there are eight in D.vulnerans.

The protein resides in the secreted. Its function is as follows. Potently activates insect GPCR. More precisely, it activates the ACP receptor (ACPR) from the mosquito A.aegypti (EC(50)=3.07 nM) with a potency comparable to that of the endogenous ligand. Has no activity on receptors of the closely related neuropeptides adipokinetic hormone and corazonin. In vivo, does not reveal any observable effects when injected into crickets (A.domesticus). Does not induce increase in intracellular calcium in mouse DRG neurons, suggesting that it does not induce pain. This Doratifera vulnerans (Mottled cup moth) protein is Z-limacoditoxin(1)-Dv4.